We begin with the raw amino-acid sequence, 289 residues long: 4-diphosphocytidyl-2-C-methyl-D-erythritol kinase (289 aa).

The active site involves K13. ATP is bound at residue P101 to S111. Residue D143 is part of the active site.

It belongs to the GHMP kinase family. IspE subfamily.

The catalysed reaction is 4-CDP-2-C-methyl-D-erythritol + ATP = 4-CDP-2-C-methyl-D-erythritol 2-phosphate + ADP + H(+). Its pathway is isoprenoid biosynthesis; isopentenyl diphosphate biosynthesis via DXP pathway; isopentenyl diphosphate from 1-deoxy-D-xylulose 5-phosphate: step 3/6. Catalyzes the phosphorylation of the position 2 hydroxy group of 4-diphosphocytidyl-2C-methyl-D-erythritol. In Janthinobacterium sp. (strain Marseille) (Minibacterium massiliensis), this protein is 4-diphosphocytidyl-2-C-methyl-D-erythritol kinase.